Here is a 104-residue protein sequence, read N- to C-terminus: SPbeta prophage-derived stress response protein SCP1 (104 aa).

It localises to the cytoplasm. This chain is SPbeta prophage-derived stress response protein SCP1 (yorD), found in Bacillus subtilis (strain 168).